Reading from the N-terminus, the 102-residue chain is Small ribosomal subunit protein uS10 (102 aa).

The segment at T30–T58 is disordered.

It belongs to the universal ribosomal protein uS10 family. Part of the 30S ribosomal subunit.

Functionally, involved in the binding of tRNA to the ribosomes. The polypeptide is Small ribosomal subunit protein uS10 (Haloquadratum walsbyi (strain DSM 16790 / HBSQ001)).